We begin with the raw amino-acid sequence, 757 residues long: Serine/threonine-protein phosphatase 2A 56 kDa regulatory subunit delta isoform (757 aa).

The segment covering 1–11 has biased composition (basic residues); sequence MMRGFKQRLIK. Disordered stretches follow at residues 1–172 and 188–250; these read MMRG…EDHA and ISNA…NPDT. Low complexity predominate over residues 12 to 21; that stretch reads KTTGSSSSSS. A compositionally biased stretch (basic and acidic residues) spans 23–34; it reads KKKDKEKEKEKS. 3 stretches are compositionally biased toward low complexity: residues 35–66, 86–119, and 128–147; these read STTS…GSKS, SSTS…STKK, and QSKQ…SSSS. The segment covering 160-172 has biased composition (basic and acidic residues); that stretch reads TKDDKSTSGEDHA. The span at 197 to 216 shows a compositional bias: low complexity; sequence SSDVENGNSNNNNMNINTSN. Over residues 217–228 the composition is skewed to polar residues; that stretch reads TQDANHASSQSI. 2 positions are modified to phosphothreonine: Thr-242 and Thr-257. The tract at residues 734–757 is disordered; it reads SFNTASENNTLNEENENDCDSEIQ. Residues 746-757 show a composition bias toward acidic residues; that stretch reads EENENDCDSEIQ.

It belongs to the phosphatase 2A regulatory subunit B family. In terms of assembly, PP2A consists of a common heterodimeric core enzyme, composed of a 36 kDa catalytic subunit (subunit C) and a 65 kDa constant regulatory subunit (PR65 or subunit A), that associates with a variety of regulatory subunits. Proteins that associate with the core dimer include three families of regulatory subunits B (the R2/B/PR55/B55, R3/B''/PR72/PR130/PR59 and R5/B'/B56 families), the 48 kDa variable regulatory subunit, viral proteins, and cell signaling molecules.

The protein localises to the cytoplasm. It is found in the nucleus. The B regulatory subunit might modulate substrate selectivity and catalytic activity, and might also direct the localization of the catalytic enzyme to a particular subcellular compartment. In terms of biological role, multicopy suppressor of ROX3 and HSP60. This Saccharomyces cerevisiae (strain ATCC 204508 / S288c) (Baker's yeast) protein is Serine/threonine-protein phosphatase 2A 56 kDa regulatory subunit delta isoform (RTS1).